A 130-amino-acid polypeptide reads, in one-letter code: Fluoride-specific ion channel FluC (130 aa).

The next 4 membrane-spanning stretches (helical) occupy residues 3–23, 39–59, 67–87, and 102–122; these read FVFLWAALGGAIGSSLRYFVG, GTFSVNIIGCFVIGFMGHLAV, FGIFFITGVLGGFTTFSSYGL, and ISYVLGTNILGFIGVAIGWFL. Residues glycine 77 and threonine 80 each contribute to the Na(+) site.

This sequence belongs to the fluoride channel Fluc/FEX (TC 1.A.43) family.

The protein resides in the cell inner membrane. It catalyses the reaction fluoride(in) = fluoride(out). With respect to regulation, na(+) is not transported, but it plays an essential structural role and its presence is essential for fluoride channel function. Its function is as follows. Fluoride-specific ion channel. Important for reducing fluoride concentration in the cell, thus reducing its toxicity. This chain is Fluoride-specific ion channel FluC, found in Helicobacter pylori (strain P12).